Consider the following 594-residue polypeptide: Chondroitin sulfate proteoglycan 5 (594 aa).

Residues 1–12 (MGVGGTSASDTA) are compositionally biased toward polar residues. The first 18 residues, 1 to 18 (MGVGGTSASDTALSLCPT), serve as a signal peptide directing secretion. Disordered stretches follow at residues 1 to 325 (MGVG…PWGL) and 343 to 418 (TTSF…SECR). Residues 19 to 481 (APEWPPRNGS…AIVTDFQVLC (463 aa)) lie on the Extracellular side of the membrane. Residues N26 and N44 are each glycosylated (N-linked (GlcNAc...) asparagine). A compositionally biased stretch (low complexity) spans 140–181 (SPGLGLSSPGPNLGLPSLDLPNPNLGLPDPNLGLPNPSLGLP). Pro residues-rich tracts occupy residues 182 to 195 (SPGP…PNPN) and 219 to 229 (IPLPSPSPGPG). The segment covering 248 to 259 (PQPSSSPAPAQR) has biased composition (low complexity). Positions 298 to 310 (GGHGPGGGHGAGG) are enriched in gly residues. The interval 338–377 (ADFYPTTSFYAEGDDDAEEELEEDEEEEEEEDGGLEDENG) is interaction with TNC and TNR. Over residues 349–375 (EGDDDAEEELEEDEEEEEEEDGGLEDE) the composition is skewed to acidic residues. N413 and N425 each carry an N-linked (GlcNAc...) asparagine glycan. Residues 429 to 471 (RSVCDLVPSYCHNGGQCYLVESHGAFCRCNTQDYTWHKGTRCE) form the EGF-like domain. 3 disulfides stabilise this stretch: C432-C445, C439-C455, and C457-C470. A helical membrane pass occupies residues 482–502 (VAVGSAALVLLLLFMLTVFFA). The Cytoplasmic portion of the chain corresponds to 503 to 594 (KKLYLLKTEN…GVPCLHNNLG (92 aa)). The tract at residues 535-594 (TIAEGSHPNDDPGAPHKLQDPLKPGLKDEEPLSILSTAPEEGSKGEPGGCGVPCLHNNLG) is disordered. Positions 541–564 (HPNDDPGAPHKLQDPLKPGLKDEE) are enriched in basic and acidic residues.

In terms of assembly, binds TNC and TNR. The 80 kDa form but not the 140 kDa form can bind TNC and TNR when expressed at the cell surface. Different forms exist: the 140 kDa form (also reported as 130 kDa), which probably consists of the entire protein, and the 38 and 80 kDa forms, which are probably cleaved in their N-terminus. Increase in synaptic activity, results in shedding of the extracellular domain and expression at the cell surface of a 38 kDa form. A form of 200 kDa has also been reported, which is probably hyperglycosylated. In terms of processing, N-glycosylated. Post-translationally, O-glycosylated; contains chondroitin sulfate glycans. Part-time proteoglycan, the 200 kDa form is the only one containing chondroitin sulfate glycans. In terms of tissue distribution, expressed in astroglial and neuronal surfaces in different parts of the embryonic brain. Expressed in adult brain and retina (at protein level).

Its subcellular location is the cell membrane. Its function is as follows. May function as a growth and differentiation factor involved in neuritogenesis and more particularly in neurite extension. This is Chondroitin sulfate proteoglycan 5 (CSPG5) from Gallus gallus (Chicken).